A 297-amino-acid chain; its full sequence is MPELPEVETVKRGLAPSMEGRRLTRLELRRTDLRFPLPVDFAARTQGRLIVSLSRRAKYLLIDLDDGVSIVSHLGMSGSYRIEAANETGLPGQFHMARSRDEKHDHVIFHLSGPEGDPLRVIYNDPRRFGFMDMVERRHMDRHAAFAGLGPEPVGNALDADYLAFRFKGKAQPLKTALLDQKVIAGLGNIYVCEALWRAHLSPETPARALVNAEGKPVAALEDLTQAIRTVIAEAIEAGGSSLRDHIQADGSLGYFQHSFNVYDREGEACRTPGCTGTVERMTQAGRSTFHCPQCQR.

Residue proline 2 is the Schiff-base intermediate with DNA of the active site. Glutamate 3 functions as the Proton donor in the catalytic mechanism. Lysine 58 serves as the catalytic Proton donor; for beta-elimination activity. Residues histidine 104, arginine 127, and lysine 170 each coordinate DNA. The segment at 261-297 (NVYDREGEACRTPGCTGTVERMTQAGRSTFHCPQCQR) adopts an FPG-type zinc-finger fold. The active-site Proton donor; for delta-elimination activity is arginine 287.

This sequence belongs to the FPG family. Monomer. It depends on Zn(2+) as a cofactor.

The enzyme catalyses Hydrolysis of DNA containing ring-opened 7-methylguanine residues, releasing 2,6-diamino-4-hydroxy-5-(N-methyl)formamidopyrimidine.. It carries out the reaction 2'-deoxyribonucleotide-(2'-deoxyribose 5'-phosphate)-2'-deoxyribonucleotide-DNA = a 3'-end 2'-deoxyribonucleotide-(2,3-dehydro-2,3-deoxyribose 5'-phosphate)-DNA + a 5'-end 5'-phospho-2'-deoxyribonucleoside-DNA + H(+). In terms of biological role, involved in base excision repair of DNA damaged by oxidation or by mutagenic agents. Acts as a DNA glycosylase that recognizes and removes damaged bases. Has a preference for oxidized purines, such as 7,8-dihydro-8-oxoguanine (8-oxoG). Has AP (apurinic/apyrimidinic) lyase activity and introduces nicks in the DNA strand. Cleaves the DNA backbone by beta-delta elimination to generate a single-strand break at the site of the removed base with both 3'- and 5'-phosphates. The protein is Formamidopyrimidine-DNA glycosylase of Allorhizobium ampelinum (strain ATCC BAA-846 / DSM 112012 / S4) (Agrobacterium vitis (strain S4)).